The sequence spans 74 residues: UPF0248 protein MK0350 (74 aa).

The protein belongs to the UPF0248 family.

The chain is UPF0248 protein MK0350 from Methanopyrus kandleri (strain AV19 / DSM 6324 / JCM 9639 / NBRC 100938).